Consider the following 376-residue polypeptide: Protein insensitive (376 aa).

Residues 50-79 (QVEVENRALRDKVRYLEAKLQQHKDLLSQI) adopt a coiled-coil conformation. One can recognise a BEN domain in the interval 258-356 (GPNNTCVPAS…TKCADENKMM (99 aa)).

In terms of assembly, homodimer. Interacts (via BEN domain) with Su(H). Interacts with Cp190.

The protein localises to the nucleus. In terms of biological role, can act as both a transcriptional repressor and corepressor. Represses the expression of genes involved in neural development and preferentially binds palindromic sequence 5'-CCAATTGG-3' to mediate transcriptional repression. Acts as a corepressor for suppressor of hairless (Su(H)) and inhibits Notch signaling during peripheral nervous system development. This Drosophila melanogaster (Fruit fly) protein is Protein insensitive (insv).